Here is a 51-residue protein sequence, read N- to C-terminus: Protein Tat (51 aa).

Residues 1–25 (EAETATKSCSGRQANQVSLPKQPAS) are compositionally biased toward polar residues. Residues 1 to 51 (EAETATKSCSGRQANQVSLPKQPASQPRGDPTGPKESKKKVETETETDPVN) are disordered. A Glycyl lysine isopeptide (Lys-Gly) (interchain with G-Cter in ubiquitin) cross-link involves residue lysine 21. The Cell attachment site signature appears at 28–30 (RGD). Over residues 33-43 (GPKESKKKVET) the composition is skewed to basic and acidic residues.

This sequence belongs to the lentiviruses Tat family. As to quaternary structure, interacts with host CCNT1. Associates with the P-TEFb complex composed at least of Tat, P-TEFb (CDK9 and CCNT1), TAR RNA, RNA Pol II. Recruits the HATs CREBBP, TAF1/TFIID, EP300, PCAF and GCN5L2. Interacts with host KAT5/Tip60; this interaction targets the latter to degradation. Interacts with the host deacetylase SIRT1. Interacts with host capping enzyme RNGTT; this interaction stimulates RNGTT. Binds to host KDR, and to the host integrins ITGAV/ITGB3 and ITGA5/ITGB1. Interacts with host KPNB1/importin beta-1 without previous binding to KPNA1/importin alpha-1. Interacts with EIF2AK2. Interacts with host nucleosome assembly protein NAP1L1; this interaction may be required for the transport of Tat within the nucleus, since the two proteins interact at the nuclear rim. Interacts with host C1QBP/SF2P32; this interaction involves lysine-acetylated Tat. Interacts with the host chemokine receptors CCR2, CCR3 and CXCR4. Interacts with host DPP4/CD26; this interaction may trigger an anti-proliferative effect. Interacts with host LDLR. Interacts with the host extracellular matrix metalloproteinase MMP1. Interacts with host PRMT6; this interaction mediates Tat's methylation. Interacts with, and is ubiquitinated by MDM2/Hdm2. Interacts with host PSMC3 and HTATIP2. Interacts with STAB1; this interaction may overcome SATB1-mediated repression of IL2 and IL2RA (interleukin) in T cells by binding to the same domain than HDAC1. Interacts (when acetylated) with human CDK13, thereby increasing HIV-1 mRNA splicing and promoting the production of the doubly spliced HIV-1 protein Nef. In terms of processing, acetylation by EP300, CREBBP, GCN5L2/GCN5 and PCAF regulates the transactivation activity of Tat. Phosphorylated by EIF2AK2 on serine and threonine residues adjacent to the basic region important for TAR RNA binding and function. Phosphorylation of Tat by EIF2AK2 is dependent on the prior activation of EIF2AK2 by dsRNA. Post-translationally, asymmetrical arginine methylation by host PRMT6 seems to diminish the transactivation capacity of Tat and affects the interaction with host CCNT1. In terms of processing, polyubiquitination by MDM2 does not target Tat to degradation, but activates its transactivation function and fosters interaction with CCNT1 and TAR RNA.

The protein resides in the host nucleus. It localises to the host nucleolus. It is found in the host cytoplasm. Its subcellular location is the secreted. Transcriptional activator that increases RNA Pol II processivity, thereby increasing the level of full-length viral transcripts. Recognizes a hairpin structure at the 5'-LTR of the nascent viral mRNAs referred to as the transactivation responsive RNA element (TAR) and recruits the cyclin T1-CDK9 complex (P-TEFb complex) that will in turn hyperphosphorylate the RNA polymerase II to allow efficient elongation. The CDK9 component of P-TEFb and other Tat-activated kinases hyperphosphorylate the C-terminus of RNA Pol II that becomes stabilized and much more processive. Other factors such as HTATSF1/Tat-SF1, SUPT5H/SPT5, and HTATIP2 are also important for Tat's function. Besides its effect on RNA Pol II processivity, Tat induces chromatin remodeling of proviral genes by recruiting the histone acetyltransferases (HATs) CREBBP, EP300 and PCAF to the chromatin. This also contributes to the increase in proviral transcription rate, especially when the provirus integrates in transcriptionally silent region of the host genome. To ensure maximal activation of the LTR, Tat mediates nuclear translocation of NF-kappa-B by interacting with host RELA. Through its interaction with host TBP, Tat may also modulate transcription initiation. Tat can reactivate a latently infected cell by penetrating in it and transactivating its LTR promoter. In the cytoplasm, Tat is thought to act as a translational activator of HIV-1 mRNAs. Functionally, extracellular circulating Tat can be endocytosed by surrounding uninfected cells via the binding to several surface receptors such as CD26, CXCR4, heparan sulfate proteoglycans (HSPG) or LDLR. Neurons are rarely infected, but they internalize Tat via their LDLR. Endosomal low pH allows Tat to cross the endosome membrane to enter the cytosol and eventually further translocate into the nucleus, thereby inducing severe cell dysfunctions ranging from cell activation to cell death. Through its interaction with nuclear HATs, Tat is potentially able to control the acetylation-dependent cellular gene expression. Tat seems to inhibit the HAT activity of KAT5/Tip60 and TAF1, and consequently modify the expression of specific cellular genes. Modulates the expression of many cellular genes involved in cell survival, proliferation or in coding for cytokines (such as IL10) or cytokine receptors. May be involved in the derepression of host interleukin IL2 expression. Mediates the activation of cyclin-dependent kinases and dysregulation of microtubule network. Tat plays a role in T-cell and neurons apoptosis. Tat induced neurotoxicity and apoptosis probably contribute to neuroAIDS. Host extracellular matrix metalloproteinase MMP1 cleaves Tat and decreases Tat's mediated neurotoxicity. Circulating Tat also acts as a chemokine-like and/or growth factor-like molecule that binds to specific receptors on the surface of the cells, affecting many cellular pathways. In the vascular system, Tat binds to ITGAV/ITGB3 and ITGA5/ITGB1 integrins dimers at the surface of endothelial cells and competes with bFGF for heparin-binding sites, leading to an excess of soluble bFGF. Binds to KDR/VEGFR-2. All these Tat-mediated effects enhance angiogenesis in Kaposi's sarcoma lesions. In Homo sapiens (Human), this protein is Protein Tat.